The primary structure comprises 57 residues: MMTETRKNELENQLNQMIVMLKEAQKSLFKGQYTHAAIFVGNVSDQLPNMRMMLARG.

This is an uncharacterized protein from Haemophilus influenzae (strain ATCC 51907 / DSM 11121 / KW20 / Rd).